Consider the following 949-residue polypeptide: Translation initiation factor IF-2 (949 aa).

3 disordered regions span residues 46-82 (LTASRPAESGPEEVRVTTNIVRRRSRPSAAAEPEAEA), 145-176 (EPAVAQEASPAVTAAKPVPATPAAPPQPERAS), and 188-361 (IPIT…KTEL). The span at 152–162 (ASPAVTAAKPV) shows a compositional bias: low complexity. Residues 163 to 172 (PATPAAPPQP) show a composition bias toward pro residues. Residues 263–276 (PRDAAAPRPAGARP) show a composition bias toward low complexity. Residues 334-344 (SREERQFDPFH) are compositionally biased toward basic and acidic residues. The 170-residue stretch at 449–618 (ERPPVVTIMG…LLQADLMDLK (170 aa)) folds into the tr-type G domain. The G1 stretch occupies residues 458–465 (GHVDHGKT). GTP is bound at residue 458–465 (GHVDHGKT). The tract at residues 483 to 487 (GITQH) is G2. Positions 504-507 (DTPG) are G3. GTP contacts are provided by residues 504–508 (DTPGH) and 558–561 (NKID). Residues 558–561 (NKID) form a G4 region. A G5 region spans residues 594 to 596 (SAK).

Belongs to the TRAFAC class translation factor GTPase superfamily. Classic translation factor GTPase family. IF-2 subfamily.

It is found in the cytoplasm. Functionally, one of the essential components for the initiation of protein synthesis. Protects formylmethionyl-tRNA from spontaneous hydrolysis and promotes its binding to the 30S ribosomal subunits. Also involved in the hydrolysis of GTP during the formation of the 70S ribosomal complex. This chain is Translation initiation factor IF-2, found in Trichlorobacter lovleyi (strain ATCC BAA-1151 / DSM 17278 / SZ) (Geobacter lovleyi).